The following is a 249-amino-acid chain: Phosphoribosylaminoimidazole-succinocarboxamide synthase (249 aa).

This sequence belongs to the SAICAR synthetase family.

It carries out the reaction 5-amino-1-(5-phospho-D-ribosyl)imidazole-4-carboxylate + L-aspartate + ATP = (2S)-2-[5-amino-1-(5-phospho-beta-D-ribosyl)imidazole-4-carboxamido]succinate + ADP + phosphate + 2 H(+). It participates in purine metabolism; IMP biosynthesis via de novo pathway; 5-amino-1-(5-phospho-D-ribosyl)imidazole-4-carboxamide from 5-amino-1-(5-phospho-D-ribosyl)imidazole-4-carboxylate: step 1/2. The chain is Phosphoribosylaminoimidazole-succinocarboxamide synthase from Chloroflexus aurantiacus (strain ATCC 29366 / DSM 635 / J-10-fl).